The following is a 512-amino-acid chain: Probable cytosol aminopeptidase (512 aa).

Residues K284 and D289 each coordinate Mn(2+). The active site involves K296. Positions 307, 366, and 368 each coordinate Mn(2+). R370 is an active-site residue.

It belongs to the peptidase M17 family. It depends on Mn(2+) as a cofactor.

Its subcellular location is the cytoplasm. The catalysed reaction is Release of an N-terminal amino acid, Xaa-|-Yaa-, in which Xaa is preferably Leu, but may be other amino acids including Pro although not Arg or Lys, and Yaa may be Pro. Amino acid amides and methyl esters are also readily hydrolyzed, but rates on arylamides are exceedingly low.. The enzyme catalyses Release of an N-terminal amino acid, preferentially leucine, but not glutamic or aspartic acids.. Its function is as follows. Presumably involved in the processing and regular turnover of intracellular proteins. Catalyzes the removal of unsubstituted N-terminal amino acids from various peptides. The chain is Probable cytosol aminopeptidase from Cupriavidus necator (strain ATCC 17699 / DSM 428 / KCTC 22496 / NCIMB 10442 / H16 / Stanier 337) (Ralstonia eutropha).